A 70-amino-acid chain; its full sequence is Putative membrane protein insertion efficiency factor (70 aa).

This sequence belongs to the UPF0161 family.

It is found in the cell inner membrane. In terms of biological role, could be involved in insertion of integral membrane proteins into the membrane. The chain is Putative membrane protein insertion efficiency factor from Rhizorhabdus wittichii (strain DSM 6014 / CCUG 31198 / JCM 15750 / NBRC 105917 / EY 4224 / RW1) (Sphingomonas wittichii).